We begin with the raw amino-acid sequence, 589 residues long: Serine/threonine-protein kinase shk2 (589 aa).

The 103-residue stretch at Gly-23 to Leu-125 folds into the PH domain. A CRIB domain is found at Val-129–Gly-142. The Protein kinase domain maps to Phe-309–Leu-566. Residues Leu-315–Val-323 and Lys-343 each bind ATP. Catalysis depends on Asp-434, which acts as the Proton acceptor.

This sequence belongs to the protein kinase superfamily. STE Ser/Thr protein kinase family. STE20 subfamily.

It carries out the reaction L-seryl-[protein] + ATP = O-phospho-L-seryl-[protein] + ADP + H(+). The enzyme catalyses L-threonyl-[protein] + ATP = O-phospho-L-threonyl-[protein] + ADP + H(+). In terms of biological role, forms an activated complex with GTP-bound Ras-like cdc42. Participates in Ras-dependent morphological control and mating response pathways. The sequence is that of Serine/threonine-protein kinase shk2 (shk2) from Schizosaccharomyces pombe (strain 972 / ATCC 24843) (Fission yeast).